Here is a 528-residue protein sequence, read N- to C-terminus: Peptide chain release factor 3 (528 aa).

Residues 11 to 279 (SDRRTFAIIS…GFVEWAPAPI (269 aa)) enclose the tr-type G domain. Residues 20–27 (SHPDAGKT), 88–92 (DTPGH), and 142–145 (NKMD) each bind GTP.

It belongs to the TRAFAC class translation factor GTPase superfamily. Classic translation factor GTPase family. PrfC subfamily.

Its subcellular location is the cytoplasm. Functionally, increases the formation of ribosomal termination complexes and stimulates activities of RF-1 and RF-2. It binds guanine nucleotides and has strong preference for UGA stop codons. It may interact directly with the ribosome. The stimulation of RF-1 and RF-2 is significantly reduced by GTP and GDP, but not by GMP. This Marinomonas sp. (strain MWYL1) protein is Peptide chain release factor 3.